Consider the following 508-residue polypeptide: Photosystem II CP47 reaction center protein (508 aa).

6 helical membrane-spanning segments follow: residues 21-36 (SVHIMHTALVAGWAGS), 101-115 (IVFSGLCFLAAIWHW), 140-156 (GIHLFLSGVACFGFGAF), 203-218 (IAAGTLGILAGLFHLS), 237-252 (VLSSSIAAVFFAAFVV), and 457-472 (SFALLFFFGHIWHGAR).

This sequence belongs to the PsbB/PsbC family. PsbB subfamily. As to quaternary structure, PSII is composed of 1 copy each of membrane proteins PsbA, PsbB, PsbC, PsbD, PsbE, PsbF, PsbH, PsbI, PsbJ, PsbK, PsbL, PsbM, PsbT, PsbX, PsbY, PsbZ, Psb30/Ycf12, at least 3 peripheral proteins of the oxygen-evolving complex and a large number of cofactors. It forms dimeric complexes. Binds multiple chlorophylls. PSII binds additional chlorophylls, carotenoids and specific lipids. serves as cofactor.

Its subcellular location is the plastid. It localises to the chloroplast thylakoid membrane. Functionally, one of the components of the core complex of photosystem II (PSII). It binds chlorophyll and helps catalyze the primary light-induced photochemical processes of PSII. PSII is a light-driven water:plastoquinone oxidoreductase, using light energy to abstract electrons from H(2)O, generating O(2) and a proton gradient subsequently used for ATP formation. This chain is Photosystem II CP47 reaction center protein, found in Arabis hirsuta (Hairy rock-cress).